The primary structure comprises 1012 residues: Ubiquitin-activating enzyme E1 1 (1012 aa).

Residue Arg22 participates in ATP binding. At Ser264 the chain carries Phosphoserine. Residues Ala437 and Asp463 each contribute to the ATP site. Residues Asp465 and Glu468 each contribute to the Mg(2+) site. ATP is bound by residues Asn471, Arg474, Lys487, Val513, Asp537, and Asn538. Mg(2+) is bound at residue Asp537. Residue Lys588 forms a Glycyl lysine isopeptide (Lys-Gly) (interchain with G-Cter in ubiquitin) linkage. Cys593 (glycyl thioester intermediate) is an active-site residue. Ser903 is modified (phosphoserine).

This sequence belongs to the ubiquitin-activating E1 family. In terms of assembly, monomer. Interacts with the E2 ubiquitin-conjugating enzyme ubc4.

It localises to the cytoplasm. The protein localises to the nucleus. The enzyme catalyses ATP + ubiquitin + [E1 ubiquitin-activating enzyme]-L-cysteine = AMP + diphosphate + S-ubiquitinyl-[E1 ubiquitin-activating enzyme]-L-cysteine.. It functions in the pathway protein modification; protein ubiquitination. Its activity is regulated as follows. Ubiquitin transfer between the E1 ubiquitin-activating enzyme ptr3 and E2 ubiquitin-conjugating enzyme ubc4 is enhanced by the presence of magnesium and ATP, or adenylated ubiquitin. In terms of biological role, E1 ubiquitin-activating enzyme that catalyzes the first step in ubiquitin conjugation to mark cellular proteins for degradation through the ubiquitin-proteasome system. Activates ubiquitin by first adenylating its C-terminal glycine residue with ATP, and thereafter linking this residue to the side chain of a cysteine residue in E1, yielding a ubiquitin-E1 thioester and free AMP. This chain is Ubiquitin-activating enzyme E1 1 (ptr3), found in Schizosaccharomyces pombe (strain 972 / ATCC 24843) (Fission yeast).